The following is a 1571-amino-acid chain: Paternally-expressed gene 3 protein (1571 aa).

2 disordered regions span residues 1–120 (MYHH…NPIQ) and 137–241 (AEDD…QERG). Composition is skewed to basic and acidic residues over residues 35–56 (GSER…DRWP), 80–99 (FGLD…RSQD), 169–186 (PEAK…DESS), 193–215 (KFIK…ERPP), and 223–241 (DNWK…QERG). Positions 199–265 (ARNPKSGRAR…DLASRSRALE (67 aa)) are 10 X 5 AA repeat of P-H-X-X-E. A 3 X 5 AA repeat of P-H-D-D-K region spans residues 199 to 265 (ARNPKSGRAR…DLASRSRALE (67 aa)). C2H2-type zinc fingers lie at residues 325–347 (YVCD…QIMH), 378–400 (FECK…RQIH), 436–458 (YECK…QKIH), and 520–542 (YECK…QKIH). The disordered stretch occupies residues 456–495 (KIHGRGNSDDRDNERERERDRLRARAREQRERERERERER). Disordered regions lie at residues 585 to 649 (ALMG…LKFP), 672 to 713 (EAQK…TYEG), and 764 to 820 (REDA…AKKK). Residues 592-614 (SSEHQKNRSRRNFFEGRGFEKPF) are compositionally biased toward basic and acidic residues. Polar residues-rich tracts occupy residues 770–781 (GSSSSNYHTPNV) and 799–808 (DVTFSVPSSS). A compositionally biased stretch (basic and acidic residues) spans 809–820 (VREHQKARAKKK). Residues 850–872 (FECQECGEAFARRSELIEHQKIH) form a C2H2-type 5 zinc finger. The interval 937–1070 (FNAEEPHDKE…ESHGQEKVED (134 aa)) is disordered. A compositionally biased stretch (basic and acidic residues) spans 940–1070 (EEPHDKETHG…ESHGQEKVED (131 aa)). A run of 13 repeats spans residues 942 to 946 (PHDKE), 967 to 971 (PHGDE), 987 to 991 (PHDDK), 992 to 996 (PHGQE), 997 to 1001 (PHDDK), 1002 to 1006 (PHGQE), 1007 to 1011 (PHDDK), 1012 to 1016 (PHGQE), 1017 to 1021 (PHGDE), 1022 to 1026 (PHGQE), 1027 to 1031 (PHGDE), 1032 to 1036 (PHDKE), and 1047 to 1051 (PHSEE). 4 consecutive C2H2-type zinc fingers follow at residues 1091-1113 (YECQ…QDTH), 1147-1169 (YECP…QRVH), 1209-1231 (IRCR…MRQH), and 1266-1289 (FECT…TKVH). Residues 1317–1339 (YECKDCGQSFLDDTVIAERMVFH) form a C2H2-type 10; degenerate zinc finger. The segment at 1373–1487 (NAEAAEPEVE…DQEIEVEEPY (115 aa)) is disordered. Acidic residues-rich tracts occupy residues 1377 to 1397 (AEPE…EVEA), 1405 to 1418 (EGPD…DGEA), and 1431 to 1485 (DADE…EVEE). C2H2-type zinc fingers lie at residues 1488-1510 (YNCH…LKSH) and 1547-1569 (FKCD…QNSH).

It belongs to the krueppel C2H2-type zinc-finger protein family. Homodimer. Interacts with SIAH1A and SIAH2. Interacts with TRAF2. Brain, glial cells, neurons, skeletal muscle, uterus and placenta. In the placenta it is found in all trophoblast cells.

Its subcellular location is the nucleus. It is found in the cytoplasm. Its function is as follows. Induces apoptosis in cooperation with SIAH1A. Acts as a mediator between p53/TP53 and BAX in a neuronal death pathway that is activated by DNA damage. Acts synergistically with TRAF2 and inhibits TNF induced apoptosis through activation of NF-kappa-B. Plays a role in regulating maternal behavior and offspring growth. The chain is Paternally-expressed gene 3 protein (Peg3) from Mus musculus (Mouse).